A 186-amino-acid chain; its full sequence is Elongation factor P (186 aa).

Belongs to the elongation factor P family.

It is found in the cytoplasm. Its pathway is protein biosynthesis; polypeptide chain elongation. In terms of biological role, involved in peptide bond synthesis. Stimulates efficient translation and peptide-bond synthesis on native or reconstituted 70S ribosomes in vitro. Probably functions indirectly by altering the affinity of the ribosome for aminoacyl-tRNA, thus increasing their reactivity as acceptors for peptidyl transferase. The chain is Elongation factor P from Cupriavidus metallidurans (strain ATCC 43123 / DSM 2839 / NBRC 102507 / CH34) (Ralstonia metallidurans).